The following is a 459-amino-acid chain: tRNA modification GTPase MnmE (459 aa).

Positions 23, 88, and 127 each coordinate (6S)-5-formyl-5,6,7,8-tetrahydrofolate. Positions 223-381 (GLDVVIVGKP…LKEYIKDLFF (159 aa)) constitute a TrmE-type G domain. Asn-233 contacts K(+). GTP contacts are provided by residues 233–238 (NVGKSS), 252–258 (TEIPGTT), and 277–280 (DTAG). Ser-237 contributes to the Mg(2+) binding site. Thr-252, Ile-254, and Thr-257 together coordinate K(+). Thr-258 is a binding site for Mg(2+). Lys-459 lines the (6S)-5-formyl-5,6,7,8-tetrahydrofolate pocket.

This sequence belongs to the TRAFAC class TrmE-Era-EngA-EngB-Septin-like GTPase superfamily. TrmE GTPase family. As to quaternary structure, homodimer. Heterotetramer of two MnmE and two MnmG subunits. K(+) is required as a cofactor.

It localises to the cytoplasm. Functionally, exhibits a very high intrinsic GTPase hydrolysis rate. Involved in the addition of a carboxymethylaminomethyl (cmnm) group at the wobble position (U34) of certain tRNAs, forming tRNA-cmnm(5)s(2)U34. The sequence is that of tRNA modification GTPase MnmE from Clostridium tetani (strain Massachusetts / E88).